A 432-amino-acid chain; its full sequence is Homogentisate 1,2-dioxygenase (432 aa).

Histidine 286 functions as the Proton acceptor in the catalytic mechanism. Histidine 329 and glutamate 335 together coordinate Fe cation. Residues tyrosine 344 and histidine 365 each contribute to the homogentisate site. Histidine 365 contributes to the Fe cation binding site.

The protein belongs to the homogentisate dioxygenase family. Hexamer; dimer of trimers. Fe cation serves as cofactor.

It catalyses the reaction homogentisate + O2 = 4-maleylacetoacetate + H(+). It functions in the pathway amino-acid degradation; L-phenylalanine degradation; acetoacetate and fumarate from L-phenylalanine: step 4/6. Its function is as follows. Involved in the catabolism of homogentisate (2,5-dihydroxyphenylacetate or 2,5-OH-PhAc), a central intermediate in the degradation of phenylalanine and tyrosine. Catalyzes the oxidative ring cleavage of the aromatic ring of homogentisate to yield maleylacetoacetate. The sequence is that of Homogentisate 1,2-dioxygenase from Bordetella petrii (strain ATCC BAA-461 / DSM 12804 / CCUG 43448).